A 553-amino-acid polypeptide reads, in one-letter code: Arginine--tRNA ligase (553 aa).

The 'HIGH' region signature appears at 130–140 (ANPTGPVHLGG).

Belongs to the class-I aminoacyl-tRNA synthetase family. Monomer.

The protein resides in the cytoplasm. The catalysed reaction is tRNA(Arg) + L-arginine + ATP = L-arginyl-tRNA(Arg) + AMP + diphosphate. This Saccharopolyspora erythraea (strain ATCC 11635 / DSM 40517 / JCM 4748 / NBRC 13426 / NCIMB 8594 / NRRL 2338) protein is Arginine--tRNA ligase.